The following is an 827-amino-acid chain: MNDETLREQTTAESEETSPTTPSPEPEVVETLPLIPLEGAVVFPYIVVSLTLDELGSASAEAAAREGRQVLLAARRPDAPADAPITDQLFNVGVVARIEQLGTLPNGASGVVVRGLVRAVLGEAVQTTPYLRFRFTRRPDVFERTPELEQLMVEVHAAIDAVLELRPGVTQEIRNFVRSIDDPGHLADNTGYSPDYTFAERQELLETFDVSERLRKVLMFYRKQFALLEVQAKLRQEVQESAARQQREFYLRQQLRAIQKELGEDTSEAAELDDLRQKLAAADLPEVARKEADRELSRLARINASSPEYQMVRTYLEWLAELPWNKYTGQPIDIAFARQVLDEDHHGLQKVKERILEYLAVKQRRAALGEENLRANREPILAFVGPPGVGKTSLGQSIARALGRSFVRMSLGGVRDEAELRGFRRTYIGSQPGRIIQELRRAGTADPVILLDEIDKLGIDYRGDPAAALLEVLDPEQNHTFTDHYLNLPFDLSRVLFLATANTWDTVPPALRDRMEVIELSGYIEDEKVQIAQIHLVPRQLRANGLRPEEAVVTEDAIRCIINEYTREAGVRNLERSIGAVLRKVARRLSEGEIDPANTPFVVDAAFVRAALGRPRFTNETRERIDQPGVAIGLVWTPVGGDIIFVEASAVEGKKELTITGQLGEVMRESAEAALTYVRSRARSLGIEPDFFETHAIHIHVPAGAVPKDGPSAGITMATALASAATGRLVRDDIAMTGEISLRGRVLPIGGIKEKALGAHRAGIRTVILPRRNLIDLDDLPPAVSAEMTFIPVDTLDEVLSIALLPPATTTDTLTVAQRSDVLTPAS.

The interval 1–27 (MNDETLREQTTAESEETSPTTPSPEPE) is disordered. The region spanning 32–225 (LPLIPLEGAV…KVLMFYRKQF (194 aa)) is the Lon N-terminal domain. 385–392 (GPPGVGKT) is a binding site for ATP. Residues 625–806 (IDQPGVAIGL…DEVLSIALLP (182 aa)) form the Lon proteolytic domain. Active-site residues include serine 712 and lysine 755.

This sequence belongs to the peptidase S16 family. As to quaternary structure, homohexamer. Organized in a ring with a central cavity.

Its subcellular location is the cytoplasm. The catalysed reaction is Hydrolysis of proteins in presence of ATP.. Its function is as follows. ATP-dependent serine protease that mediates the selective degradation of mutant and abnormal proteins as well as certain short-lived regulatory proteins. Required for cellular homeostasis and for survival from DNA damage and developmental changes induced by stress. Degrades polypeptides processively to yield small peptide fragments that are 5 to 10 amino acids long. Binds to DNA in a double-stranded, site-specific manner. The protein is Lon protease of Chloroflexus aurantiacus (strain ATCC 29366 / DSM 635 / J-10-fl).